The following is a 441-amino-acid chain: Arginine biosynthesis bifunctional protein ArgJ, mitochondrial (441 aa).

A mitochondrion-targeting transit peptide spans 1-8; it reads MRISSTLL. 6 residues coordinate substrate: threonine 177, lysine 204, threonine 215, glutamate 301, asparagine 436, and serine 441. The active-site Nucleophile is threonine 215.

Belongs to the ArgJ family. Heterodimer of an alpha and a beta chain. Post-translationally, the alpha and beta chains are autoproteolytically processed from a single precursor protein within the mitochondrion.

It is found in the mitochondrion matrix. It carries out the reaction N(2)-acetyl-L-ornithine + L-glutamate = N-acetyl-L-glutamate + L-ornithine. The enzyme catalyses L-glutamate + acetyl-CoA = N-acetyl-L-glutamate + CoA + H(+). Its pathway is amino-acid biosynthesis; L-arginine biosynthesis; L-ornithine and N-acetyl-L-glutamate from L-glutamate and N(2)-acetyl-L-ornithine (cyclic): step 1/1. It functions in the pathway amino-acid biosynthesis; L-arginine biosynthesis; N(2)-acetyl-L-ornithine from L-glutamate: step 1/4. In terms of biological role, catalyzes two activities which are involved in the cyclic version of arginine biosynthesis: the synthesis of acetylglutamate from glutamate and acetyl-CoA, and of ornithine by transacetylation between acetylornithine and glutamate. In Saccharomyces cerevisiae (strain Lalvin EC1118 / Prise de mousse) (Baker's yeast), this protein is Arginine biosynthesis bifunctional protein ArgJ, mitochondrial.